The primary structure comprises 229 residues: Endonuclease V (229 aa).

The protein belongs to the endonuclease V family.

The protein localises to the cytoplasm. The catalysed reaction is Endonucleolytic cleavage at apurinic or apyrimidinic sites to products with a 5'-phosphate.. Functionally, DNA repair enzyme involved in the repair of deaminated bases. Selectively cleaves double-stranded DNA at the second phosphodiester bond 3' to a deoxyinosine leaving behind the intact lesion on the nicked DNA. The chain is Endonuclease V from Methanopyrus kandleri (strain AV19 / DSM 6324 / JCM 9639 / NBRC 100938).